Here is an 807-residue protein sequence, read N- to C-terminus: MPKQDSLWLKSLRWIQKHLVHTIVVPQDPFADLNLDTSRPLAYVMKTESLSDIAALSEVTEKLGLPSPYEPLVVNGVVAPRVVCLQGRKPLFGERAGNEPFLECFMRLLAVHKERPELDIQLVPVSLYWGRTPGKEDDTMKAAVLERENPTWLRKCFMILFLGRHNFVQFSNAVSLRYMADEHGTDMGIAHKLARVARVHFRRQRKVMTGPLLPNRQALFDSLLKSESLRKAIQEEAVSKKISETQARETAIEYLDEIAANYSDSLVRIAERFLTWLWNKLYSGINIKGAEHIRQLHHDGHEIVYVPCHRSHMDYLLLSYILYYQGMVPPHIAAGINLNFWPAGPLFRRGGAFFIRRSFNGNKLYTAVFREYLDQLFAKGYSVEYFSEGGRSRTGRLLAPKTGMIAMTMNSVLRGIERPVTLVPVYLGYDHVMEVATYHKELSGKKKQKESVWQVFGAIRKLGNFGQGYVNFGEPITLQTFLNEMAPNWRAELADDPEQKPTWLTPAVNVLANRVMTRINDAAAASSVTLTSLALLASEQNALERCLLERQLDLYLTLLKRVPYTSFTSVAEGDGKHLVQQGINLNKFSVSSDPLGEIVSIDANQAISMTYYRNNIIHLFIIPSLIASCLTHNEQSQRQQIVAIVNDFYPLLKAELFMGIKDIPSYVNQVLDLFIEQGLITESDNLSVVTEHSSQLVLLSGSVSETLQRYAIIFNLLAHRPKMERSELESESHLLAQRLGALHGITAPEFYDKKLYGTLSVKLKELGYLSDKDDKSDVKRIRDQANSLLRASVRQTIVASVTAEHIS.

Positions 308-313 (CHRSHM) match the HXXXXD motif motif.

Belongs to the GPAT/DAPAT family.

The protein resides in the cell inner membrane. It carries out the reaction sn-glycerol 3-phosphate + an acyl-CoA = a 1-acyl-sn-glycero-3-phosphate + CoA. It participates in phospholipid metabolism; CDP-diacylglycerol biosynthesis; CDP-diacylglycerol from sn-glycerol 3-phosphate: step 1/3. The polypeptide is Glycerol-3-phosphate acyltransferase (Shewanella putrefaciens (strain CN-32 / ATCC BAA-453)).